The following is a 451-amino-acid chain: Tubulin alpha-2 chain (451 aa).

GTP contacts are provided by Gln-12, Asp-73, Ser-142, Gly-146, Thr-147, Thr-181, Asn-208, and Asn-230. A Mg(2+)-binding site is contributed by Asp-73. Glu-256 is a catalytic residue.

The protein belongs to the tubulin family. As to quaternary structure, dimer of alpha and beta chains. A typical microtubule is a hollow water-filled tube with an outer diameter of 25 nm and an inner diameter of 15 nM. Alpha-beta heterodimers associate head-to-tail to form protofilaments running lengthwise along the microtubule wall with the beta-tubulin subunit facing the microtubule plus end conferring a structural polarity. Microtubules usually have 13 protofilaments but different protofilament numbers can be found in some organisms and specialized cells. The cofactor is Mg(2+).

It localises to the cytoplasm. The protein localises to the cytoskeleton. The enzyme catalyses GTP + H2O = GDP + phosphate + H(+). Functionally, tubulin is the major constituent of microtubules, a cylinder consisting of laterally associated linear protofilaments composed of alpha- and beta-tubulin heterodimers. Microtubules grow by the addition of GTP-tubulin dimers to the microtubule end, where a stabilizing cap forms. Below the cap, tubulin dimers are in GDP-bound state, owing to GTPase activity of alpha-tubulin. The chain is Tubulin alpha-2 chain (tubB) from Emericella nidulans (strain FGSC A4 / ATCC 38163 / CBS 112.46 / NRRL 194 / M139) (Aspergillus nidulans).